We begin with the raw amino-acid sequence, 476 residues long: Arginine biosynthesis bifunctional protein ArgJ, mitochondrial (476 aa).

6 residues coordinate substrate: threonine 193, lysine 219, threonine 237, glutamate 337, asparagine 471, and serine 476. Residue threonine 237 is the Nucleophile of the active site.

The protein belongs to the ArgJ family. As to quaternary structure, heterodimer of an alpha and a beta chain. The alpha and beta chains are autoproteolytically processed from a single precursor protein within the mitochondrion.

Its subcellular location is the mitochondrion matrix. The catalysed reaction is N(2)-acetyl-L-ornithine + L-glutamate = N-acetyl-L-glutamate + L-ornithine. It carries out the reaction L-glutamate + acetyl-CoA = N-acetyl-L-glutamate + CoA + H(+). It participates in amino-acid biosynthesis; L-arginine biosynthesis; L-ornithine and N-acetyl-L-glutamate from L-glutamate and N(2)-acetyl-L-ornithine (cyclic): step 1/1. It functions in the pathway amino-acid biosynthesis; L-arginine biosynthesis; N(2)-acetyl-L-ornithine from L-glutamate: step 1/4. Functionally, catalyzes two activities which are involved in the cyclic version of arginine biosynthesis: the synthesis of acetylglutamate from glutamate and acetyl-CoA, and of ornithine by transacetylation between acetylornithine and glutamate. The chain is Arginine biosynthesis bifunctional protein ArgJ, mitochondrial from Cryptococcus neoformans var. neoformans serotype D (strain B-3501A) (Filobasidiella neoformans).